The following is a 46-amino-acid chain: Mu-hexatoxin-Mg2a (46 aa).

5 disulfides stabilise this stretch: C3–C18, C10–C24, C17–C36, C21–C43, and C26–C34.

The protein belongs to the neurotoxin 02 (plectoxin) family. 02 (plectoxin) subfamily. Expressed by the venom gland.

The protein localises to the secreted. Functionally, competes for binding at site 3 of the insect voltage-gated sodium channel (Nav). Insecticidal neurotoxin. Causes temporary paralysis to lepidopteran larvae (10.3 nmol/g) or to crickets (doses from 0.93 to 119 ug/g). Is not toxic to mice when injected intracranially (high doses). This Macrothele gigas (Japanese funnel web spider) protein is Mu-hexatoxin-Mg2a.